The chain runs to 360 residues: F-box protein SKP2A (360 aa).

One can recognise an F-box domain in the interval 25–71 (IKEWKDIPVELLMRILSLVDDRNVIVASGVCTGWRDAISFGLTRLRL). (indol-3-yl)acetate-binding positions include 127-128 (SL), 149-152 (NLSG), 175-178 (NLCG), and Asn-202.

In terms of assembly, part of a SCF (ASK-cullin-F-box) protein ligase complex. Interacts with CUL1 (RUB1-modified and non-modified isoforms), SKP1A, SKP1B and ASK18. Recruit DPB and phosphorylated E2FC. Interacts with auxin. Auxin controls the interaction with DPB. In terms of processing, polyubiquitinated and subsequently targeted to proteasome. Auxin promotes this ubiquitination-mediated degradation. Expressed in embryo, seedlings, hypocotyl, roots, leaves and flowers.

The protein resides in the nucleus. It functions in the pathway protein modification; protein ubiquitination. Its function is as follows. Component of SCF(SKP2A) E3 ubiquitin ligase complexes, which mediate the ubiquitination and subsequent proteasomal degradation of target proteins (including cell cycle repressors). Acts as an auxin receptor; one active auxin is indole-3-acetate. Regulates the stability of the transcription factors E2FC and DPB, repressors of cell proliferation. Confers increase tolerance to osmotic stress by promoting cell division, especially in meristems. Promotes the formation of lateral root primordia. The chain is F-box protein SKP2A (SKP2A) from Arabidopsis thaliana (Mouse-ear cress).